The following is a 468-amino-acid chain: Chromosomal replication initiator protein DnaA (468 aa).

The interval 1–84 is domain I, interacts with DnaA modulators; that stretch reads MSSSLWLQCL…RFEVGSRPVA (84 aa). Residues 81–104 form a disordered region; that stretch reads RPVAAPKPAPTRTPADVAAESSAP. Positions 84–131 are domain II; the sequence is AAPKPAPTRTPADVAAESSAPAQLQARKPVHKTWDDDAQAIADINHRS. A domain III, AAA+ region region spans residues 132-348; that stretch reads NVNPKHKFNN…GALNRVIANA (217 aa). ATP is bound by residues Gly-176, Gly-178, Lys-179, and Thr-180. The interval 349–468 is domain IV, binds dsDNA; the sequence is NFTGRPITID…YSNLIRTLSS (120 aa).

This sequence belongs to the DnaA family. Oligomerizes as a right-handed, spiral filament on DNA at oriC.

The protein localises to the cytoplasm. In terms of biological role, plays an essential role in the initiation and regulation of chromosomal replication. ATP-DnaA binds to the origin of replication (oriC) to initiate formation of the DNA replication initiation complex once per cell cycle. Binds the DnaA box (a 9 base pair repeat at the origin) and separates the double-stranded (ds)DNA. Forms a right-handed helical filament on oriC DNA; dsDNA binds to the exterior of the filament while single-stranded (ss)DNA is stabiized in the filament's interior. The ATP-DnaA-oriC complex binds and stabilizes one strand of the AT-rich DNA unwinding element (DUE), permitting loading of DNA polymerase. After initiation quickly degrades to an ADP-DnaA complex that is not apt for DNA replication. Binds acidic phospholipids. The chain is Chromosomal replication initiator protein DnaA from Vibrio campbellii (strain ATCC BAA-1116).